Reading from the N-terminus, the 374-residue chain is Guanine nucleotide-binding protein subunit alpha-15 (374 aa).

One can recognise a G-alpha domain in the interval 41–374 (GELKLLLLGT…ARYLDEINLL (334 aa)). The segment at 44-57 (KLLLLGTGESGKST) is G1 motif. GTP-binding positions include 49 to 56 (GTGESGKS), 183 to 189 (LRSRMPT), 208 to 212 (DVGGQ), 277 to 280 (NKTD), and A346. Residues S56 and T189 each contribute to the Mg(2+) site. The interval 181 to 189 (DVLRSRMPT) is G2 motif. Residues 204-213 (LRIVDVGGQK) form a G3 motif region. Residues 273–280 (ILFLNKTD) form a G4 motif region. Residues 344–349 (TCATDT) form a G5 motif region.

Belongs to the G-alpha family. G(q) subfamily. G proteins are composed of 3 units; alpha, beta and gamma. The alpha chain contains the guanine nucleotide binding site.

Functionally, guanine nucleotide-binding proteins (G proteins) are involved as modulators or transducers in various transmembrane signaling systems. The polypeptide is Guanine nucleotide-binding protein subunit alpha-15 (GNA15) (Oryctolagus cuniculus (Rabbit)).